The sequence spans 305 residues: UDP-N-acetylenolpyruvoylglucosamine reductase 2 (305 aa).

The region spanning 33-197 (VGGKADVFVA…LEARFELEEG (165 aa)) is the FAD-binding PCMH-type domain. R176 is a catalytic residue. The Proton donor role is filled by S226. E296 is a catalytic residue.

It belongs to the MurB family. It depends on FAD as a cofactor.

It is found in the cytoplasm. The catalysed reaction is UDP-N-acetyl-alpha-D-muramate + NADP(+) = UDP-N-acetyl-3-O-(1-carboxyvinyl)-alpha-D-glucosamine + NADPH + H(+). It functions in the pathway cell wall biogenesis; peptidoglycan biosynthesis. In terms of biological role, cell wall formation. This is UDP-N-acetylenolpyruvoylglucosamine reductase 2 (murB2) from Bacillus cereus (strain ATCC 14579 / DSM 31 / CCUG 7414 / JCM 2152 / NBRC 15305 / NCIMB 9373 / NCTC 2599 / NRRL B-3711).